Consider the following 438-residue polypeptide: Elongation factor 1-alpha (438 aa).

In terms of domain architecture, tr-type G spans 5-228 (KPHLNLVVIG…ALDSLEPPPK (224 aa)). Positions 14 to 21 (GHVDHGKS) are G1. 14 to 21 (GHVDHGKS) serves as a coordination point for GTP. Residue serine 21 participates in Mg(2+) binding. The tract at residues 70 to 74 (GVTIA) is G2. The segment at 91–94 (DAPG) is G3. GTP-binding positions include 91–95 (DAPGH) and 153–156 (NKMD). The tract at residues 153-156 (NKMD) is G4. A G5 region spans residues 194 to 196 (SAW).

Belongs to the TRAFAC class translation factor GTPase superfamily. Classic translation factor GTPase family. EF-Tu/EF-1A subfamily.

Its subcellular location is the cytoplasm. The enzyme catalyses GTP + H2O = GDP + phosphate + H(+). Its function is as follows. GTP hydrolase that promotes the GTP-dependent binding of aminoacyl-tRNA to the A-site of ribosomes during protein biosynthesis. This Staphylothermus marinus (strain ATCC 43588 / DSM 3639 / JCM 9404 / F1) protein is Elongation factor 1-alpha.